Reading from the N-terminus, the 427-residue chain is Trigger factor (427 aa).

One can recognise a PPIase FKBP-type domain in the interval 160 to 240 (TDTVIGDVEK…VKEVKRLELP (81 aa)).

It belongs to the FKBP-type PPIase family. Tig subfamily.

It is found in the cytoplasm. The catalysed reaction is [protein]-peptidylproline (omega=180) = [protein]-peptidylproline (omega=0). Its function is as follows. Involved in protein export. Acts as a chaperone by maintaining the newly synthesized protein in an open conformation. Functions as a peptidyl-prolyl cis-trans isomerase. The sequence is that of Trigger factor from Chlorobium phaeobacteroides (strain DSM 266 / SMG 266 / 2430).